The sequence spans 557 residues: Dihydroxy-acid dehydratase (557 aa).

A [2Fe-2S] cluster-binding site is contributed by Cys-50. Asp-82 serves as a coordination point for Mg(2+). Cys-123 is a [2Fe-2S] cluster binding site. Mg(2+) is bound by residues Asp-124 and Lys-125. Lys-125 is subject to N6-carboxylysine. Residue Cys-195 participates in [2Fe-2S] cluster binding. A Mg(2+)-binding site is contributed by Glu-447. Ser-473 functions as the Proton acceptor in the catalytic mechanism.

This sequence belongs to the IlvD/Edd family. Homodimer. The cofactor is [2Fe-2S] cluster. Mg(2+) serves as cofactor.

It carries out the reaction (2R)-2,3-dihydroxy-3-methylbutanoate = 3-methyl-2-oxobutanoate + H2O. The enzyme catalyses (2R,3R)-2,3-dihydroxy-3-methylpentanoate = (S)-3-methyl-2-oxopentanoate + H2O. The protein operates within amino-acid biosynthesis; L-isoleucine biosynthesis; L-isoleucine from 2-oxobutanoate: step 3/4. It functions in the pathway amino-acid biosynthesis; L-valine biosynthesis; L-valine from pyruvate: step 3/4. Functions in the biosynthesis of branched-chain amino acids. Catalyzes the dehydration of (2R,3R)-2,3-dihydroxy-3-methylpentanoate (2,3-dihydroxy-3-methylvalerate) into 2-oxo-3-methylpentanoate (2-oxo-3-methylvalerate) and of (2R)-2,3-dihydroxy-3-methylbutanoate (2,3-dihydroxyisovalerate) into 2-oxo-3-methylbutanoate (2-oxoisovalerate), the penultimate precursor to L-isoleucine and L-valine, respectively. The chain is Dihydroxy-acid dehydratase from Janthinobacterium sp. (strain Marseille) (Minibacterium massiliensis).